Here is a 423-residue protein sequence, read N- to C-terminus: Serine--tRNA ligase (423 aa).

230–232 is an L-serine binding site; sequence TAE. 261-263 contributes to the ATP binding site; the sequence is RAE. Glu284 serves as a coordination point for L-serine. 348–351 is an ATP binding site; the sequence is EISS. An L-serine-binding site is contributed by Ser384.

Belongs to the class-II aminoacyl-tRNA synthetase family. Type-1 seryl-tRNA synthetase subfamily. Homodimer. The tRNA molecule binds across the dimer.

The protein localises to the cytoplasm. The catalysed reaction is tRNA(Ser) + L-serine + ATP = L-seryl-tRNA(Ser) + AMP + diphosphate + H(+). It catalyses the reaction tRNA(Sec) + L-serine + ATP = L-seryl-tRNA(Sec) + AMP + diphosphate + H(+). It participates in aminoacyl-tRNA biosynthesis; selenocysteinyl-tRNA(Sec) biosynthesis; L-seryl-tRNA(Sec) from L-serine and tRNA(Sec): step 1/1. Functionally, catalyzes the attachment of serine to tRNA(Ser). Is also able to aminoacylate tRNA(Sec) with serine, to form the misacylated tRNA L-seryl-tRNA(Sec), which will be further converted into selenocysteinyl-tRNA(Sec). This is Serine--tRNA ligase from Acetivibrio thermocellus (strain ATCC 27405 / DSM 1237 / JCM 9322 / NBRC 103400 / NCIMB 10682 / NRRL B-4536 / VPI 7372) (Clostridium thermocellum).